The following is an 88-amino-acid chain: Defensin-like protein 98 (88 aa).

An N-terminal signal peptide occupies residues 1–29 (MGSLRVSTVVIAVVACLSILLISPTEVDG). 4 disulfides stabilise this stretch: C33–C76, C40–C62, C46–C73, and C50–C75.

This sequence belongs to the DEFL family.

The protein localises to the secreted. The protein is Defensin-like protein 98 of Arabidopsis thaliana (Mouse-ear cress).